Reading from the N-terminus, the 104-residue chain is L-rhamnose mutarotase (104 aa).

Residue tyrosine 18 coordinates substrate. Histidine 22 functions as the Proton donor in the catalytic mechanism. Residues tyrosine 41 and 76–77 (WW) contribute to the substrate site.

The protein belongs to the rhamnose mutarotase family. Homodimer.

It is found in the cytoplasm. The catalysed reaction is alpha-L-rhamnose = beta-L-rhamnose. It functions in the pathway carbohydrate metabolism; L-rhamnose metabolism. Functionally, involved in the anomeric conversion of L-rhamnose. The protein is L-rhamnose mutarotase of Burkholderia orbicola (strain MC0-3).